A 145-amino-acid polypeptide reads, in one-letter code: Antimicrobial peptide NK-lysin (145 aa).

The signal sequence occupies residues M1 to S22. Positions G23–Q62 are excised as a propeptide. Residues Q62–A142 form the Saposin B-type domain. Cystine bridges form between C66-C138, C69-C132, and C97-C107. Residues K141–I145 constitute a propeptide that is removed on maturation.

It is found in the secreted. Its function is as follows. May be an effector molecule of cytotoxic activity. Has antimicrobial activity. The polypeptide is Antimicrobial peptide NK-lysin (NKL) (Equus caballus (Horse)).